A 389-amino-acid polypeptide reads, in one-letter code: Endonuclease 8-like 1 (389 aa).

Pro2 (schiff-base intermediate with DNA) is an active-site residue. The active-site Proton donor is the Glu3. The active-site Proton donor; for beta-elimination activity is the Lys54. Asn176 contacts DNA. The interval 278-389 (TIWFQGDPGP…PREAGESSAS (112 aa)) is disordered. Basic residues predominate over residues 322 to 333 (SRMRRARKHPPK). Over residues 336 to 351 (AQQSEGAGLQQNQETP) the composition is skewed to polar residues. The span at 357–373 (GKRRGQRASTGHRRRPK) shows a compositional bias: basic residues. Basic and acidic residues predominate over residues 374-389 (TIPDTRPREAGESSAS).

The protein belongs to the FPG family. As to expression, detected in heart, spleen and lung.

The protein localises to the cytoplasm. Its subcellular location is the cytoskeleton. It is found in the microtubule organizing center. The protein resides in the centrosome. It localises to the nucleus. The protein localises to the chromosome. It catalyses the reaction 2'-deoxyribonucleotide-(2'-deoxyribose 5'-phosphate)-2'-deoxyribonucleotide-DNA = a 3'-end 2'-deoxyribonucleotide-(2,3-dehydro-2,3-deoxyribose 5'-phosphate)-DNA + a 5'-end 5'-phospho-2'-deoxyribonucleoside-DNA + H(+). Its function is as follows. Involved in base excision repair of DNA damaged by oxidation or by mutagenic agents. Acts as a DNA glycosylase that recognizes and removes damaged bases. Has a preference for oxidized pyrimidines, such as thymine glycol, formamidopyrimidine (Fapy) and 5-hydroxyuracil. Has marginal activity towards 8-oxoguanine. Has AP (apurinic/apyrimidinic) lyase activity and introduces nicks in the DNA strand. Cleaves the DNA backbone by beta-delta elimination to generate a single-strand break at the site of the removed base with both 3'- and 5'-phosphates. Has DNA glycosylase/lyase activity towards mismatched uracil and thymine, in particular in U:C and T:C mismatches. Specifically binds 5-hydroxymethylcytosine (5hmC), suggesting that it acts as a specific reader of 5hmC. In Mus musculus (Mouse), this protein is Endonuclease 8-like 1 (Neil1).